A 568-amino-acid chain; its full sequence is Probable pectinesterase/pectinesterase inhibitor 23 (568 aa).

Positions 1-33 (MGSDGDKKKKFIVAGSVSGFLVIMVVSVAVVTS) are cleaved as a signal peptide. Residues 45–198 (RKTTKAVQAV…RELSSNSLAM (154 aa)) form a pectinesterase inhibitor 23 region. N-linked (GlcNAc...) asparagine glycosylation is found at N94, N210, and N316. The interval 251-548 (PGPVKANAVV…PQDALLYTGD (298 aa)) is pectinesterase 23. 2 residues coordinate substrate: T333 and Q363. D386 functions as the Proton donor; for pectinesterase activity in the catalytic mechanism. C400 and C420 are oxidised to a cystine. Catalysis depends on D407, which acts as the Nucleophile; for pectinesterase activity. Substrate contacts are provided by R475 and W477.

In the N-terminal section; belongs to the PMEI family. The protein in the C-terminal section; belongs to the pectinesterase family. Expressed in mature pollen grains in the anthers and on the stigma. Found in pollen tubes within the style.

The protein localises to the secreted. Its subcellular location is the cell wall. The catalysed reaction is [(1-&gt;4)-alpha-D-galacturonosyl methyl ester](n) + n H2O = [(1-&gt;4)-alpha-D-galacturonosyl](n) + n methanol + n H(+). The protein operates within glycan metabolism; pectin degradation; 2-dehydro-3-deoxy-D-gluconate from pectin: step 1/5. Functionally, acts in the modification of cell walls via demethylesterification of cell wall pectin. This Arabidopsis thaliana (Mouse-ear cress) protein is Probable pectinesterase/pectinesterase inhibitor 23 (PME23).